Reading from the N-terminus, the 151-residue chain is D-aminoacyl-tRNA deacylase (151 aa).

Positions 137-138 match the Gly-cisPro motif, important for rejection of L-amino acids motif; it reads GP.

Belongs to the DTD family. Homodimer.

It is found in the cytoplasm. It catalyses the reaction glycyl-tRNA(Ala) + H2O = tRNA(Ala) + glycine + H(+). The catalysed reaction is a D-aminoacyl-tRNA + H2O = a tRNA + a D-alpha-amino acid + H(+). Functionally, an aminoacyl-tRNA editing enzyme that deacylates mischarged D-aminoacyl-tRNAs. Also deacylates mischarged glycyl-tRNA(Ala), protecting cells against glycine mischarging by AlaRS. Acts via tRNA-based rather than protein-based catalysis; rejects L-amino acids rather than detecting D-amino acids in the active site. By recycling D-aminoacyl-tRNA to D-amino acids and free tRNA molecules, this enzyme counteracts the toxicity associated with the formation of D-aminoacyl-tRNA entities in vivo and helps enforce protein L-homochirality. This is D-aminoacyl-tRNA deacylase from Fusobacterium nucleatum subsp. nucleatum (strain ATCC 25586 / DSM 15643 / BCRC 10681 / CIP 101130 / JCM 8532 / KCTC 2640 / LMG 13131 / VPI 4355).